A 194-amino-acid polypeptide reads, in one-letter code: Putative manganese efflux pump MntP (194 aa).

Transmembrane regions (helical) follow at residues leucine 6 to leucine 26, tryptophan 35 to leucine 55, valine 66 to alanine 86, glycine 109 to leucine 129, valine 142 to leucine 162, and arginine 174 to valine 194.

The protein belongs to the MntP (TC 9.B.29) family.

It localises to the cell membrane. Its function is as follows. Probably functions as a manganese efflux pump. This is Putative manganese efflux pump MntP from Moorella thermoacetica (strain ATCC 39073 / JCM 9320).